The sequence spans 219 residues: Orotate phosphoribosyltransferase (219 aa).

Lys26 contacts 5-phospho-alpha-D-ribose 1-diphosphate. 34–35 serves as a coordination point for orotate; it reads FF. 5-phospho-alpha-D-ribose 1-diphosphate-binding positions include 72–73, Arg98, Lys99, Lys102, His104, and 124–132; these read YK and DDVITAGTA. Residues Thr128 and Arg156 each coordinate orotate.

It belongs to the purine/pyrimidine phosphoribosyltransferase family. PyrE subfamily. Homodimer. It depends on Mg(2+) as a cofactor.

The enzyme catalyses orotidine 5'-phosphate + diphosphate = orotate + 5-phospho-alpha-D-ribose 1-diphosphate. It functions in the pathway pyrimidine metabolism; UMP biosynthesis via de novo pathway; UMP from orotate: step 1/2. Its function is as follows. Catalyzes the transfer of a ribosyl phosphate group from 5-phosphoribose 1-diphosphate to orotate, leading to the formation of orotidine monophosphate (OMP). In Xylella fastidiosa (strain 9a5c), this protein is Orotate phosphoribosyltransferase.